Reading from the N-terminus, the 286-residue chain is Pyridoxal kinase PdxY (286 aa).

Substrate is bound by residues Ser9 and Thr44–Gln45. The ATP site is built by Asp111, Glu148, and Lys181. Residue Asp222 participates in substrate binding.

It belongs to the pyridoxine kinase family. PdxY subfamily. Homodimer. Mg(2+) is required as a cofactor.

The catalysed reaction is pyridoxal + ATP = pyridoxal 5'-phosphate + ADP + H(+). The protein operates within cofactor metabolism; pyridoxal 5'-phosphate salvage; pyridoxal 5'-phosphate from pyridoxal: step 1/1. Pyridoxal kinase involved in the salvage pathway of pyridoxal 5'-phosphate (PLP). Catalyzes the phosphorylation of pyridoxal to PLP. This chain is Pyridoxal kinase PdxY, found in Pasteurella multocida (strain Pm70).